The sequence spans 915 residues: Transferrin-binding protein A (915 aa).

The N-terminal stretch at 1-24 (MQQQHLFRFNILCLSLMTALPAYA) is a signal peptide. The Periplasmic portion of the chain corresponds to 25-187 (ENVQAGQAQE…ADDVIGEGRQ (163 aa)). A TonB box motif is present at residues 38–45 (DTIQVKAK). One can recognise a TBDR plug domain in the interval 51 to 176 (RDNEVTGLGK…LAGSVAFQTK (126 aa)). The plug loop, interacts with transferrin stretch occupies residues 121–139 (SYTAQAALGGTRTAGSSGA). In terms of domain architecture, TBDR beta-barrel spans 187-915 (QWGIQSKTAY…NYTFSLEMKF (729 aa)). Residues 188-197 (WGIQSKTAYS) traverse the membrane as a beta stranded segment. Over 198–203 (GKNRGL) the chain is Extracellular. The chain crosses the membrane as a beta stranded span at residues 204–213 (TQSIALAGRI). At 214–215 (GG) the chain is on the periplasmic side. Residues 216–225 (AEALLIHTGR) traverse the membrane as a beta stranded segment. Over 226–309 (RAGEIRAHED…FLADPLSYES (84 aa)) the chain is Extracellular. Residues 310–319 (RSWLFRPGFR) traverse the membrane as a beta stranded segment. The Periplasmic portion of the chain corresponds to 320-324 (FENKR). Residues 325 to 334 (HYIGGILEHT) form a beta stranded membrane-spanning segment. Topologically, residues 335 to 406 (QQTFDTRDMT…VFYDETHTKS (72 aa)) are extracellular. The tract at residues 351 to 361 (KAVFDANKKQA) is L3 helix finger, interacts with transferrin. The beta stranded transmembrane segment at 407 to 415 (RYGLEYVYT) threads the bilayer. Topologically, residues 416–423 (NADKDTWA) are periplasmic. Residues 424–433 (DYARLSYDRQ) form a beta stranded membrane-spanning segment. Residues 434–478 (GIGLDNHFQQTHCSADGSDKYCRPSADKPFSYYKSDRVIYGESHR) are Extracellular-facing. Residues 479–488 (LLQAAFKKSF) traverse the membrane as a beta stranded segment. Topologically, residues 489–494 (DTAKIR) are periplasmic. Residues 495 to 504 (HNLSVNLGFD) form a beta stranded membrane-spanning segment. Over 505–583 (RFGSNLRHQD…PRSINGKSYY (79 aa)) the chain is Extracellular. A disordered region spans residues 523 to 542 (AYSSNTPPQNNGKKISPNGS). Residues 584–592 (AAVRDNVRL) form a beta stranded membrane-spanning segment. Residues 593–594 (GR) are Periplasmic-facing. Residues 595–603 (WADVGAGLR) form a beta stranded membrane-spanning segment. At 604 to 623 (YDYRSTHSDDGSVSTGTHRT) the chain is on the extracellular side. A beta stranded membrane pass occupies residues 624–633 (LSWNAGIVLK). Residues 634–637 (PTDW) are Periplasmic-facing. The beta stranded transmembrane segment at 638-647 (LDLTYRTSTG) threads the bilayer. The Extracellular segment spans residues 648–675 (FRLPSFAEMYGWRAGVQSKAVKIDPEKS). The beta stranded transmembrane segment at 676–685 (FNKEAGIVFK) threads the bilayer. Over 686 to 689 (GDFG) the chain is Periplasmic. A beta stranded membrane pass occupies residues 690–699 (NLEASWFNNA). Over 700-733 (YRDLIVRGYEAQIKDGKEEAKGDPAYLNAQSARI) the chain is Extracellular. A beta stranded transmembrane segment spans residues 734–743 (TGINILGKID). Over 744-755 (WNGVWDKLPEGW) the chain is Periplasmic. A beta stranded membrane pass occupies residues 756–765 (YSTFAYNRVR). Residues 766-790 (VRDIKKRADRTDIQSHLFDAIQPSR) lie on the Extracellular side of the membrane. The beta stranded transmembrane segment at 791–799 (YVVGLGYDQ) threads the bilayer. The Periplasmic portion of the chain corresponds to 800-802 (PEG). A beta stranded transmembrane segment spans residues 803 to 811 (KWGVNGMLT). Over 812-845 (YSKAKEITELLGSRALLNGNSRNTKATARRTRPW) the chain is Extracellular. The beta stranded transmembrane segment at 846–855 (YIVDVSGYYT) threads the bilayer. Over 856 to 860 (VKKHF) the chain is Periplasmic. Residues 861–870 (TLRAGVYNLL) traverse the membrane as a beta stranded segment. The Extracellular segment spans residues 871-905 (NYRYVTWENVRQTAGGAVNQHKNVGVYNRYAAPGR). Positions 898 to 915 (NRYAAPGRNYTFSLEMKF) match the TonB C-terminal box motif. The beta stranded transmembrane segment at 906–915 (NYTFSLEMKF) threads the bilayer.

It belongs to the TonB-dependent receptor family. Binds both human apo- and holo-transferrin (TF), via the TF C-terminus. Forms a large complex with TF and TbpB.

It is found in the cell outer membrane. Its function is as follows. Neisseria acquires iron by extracting it from serum transferrin (TF) in its human host. Acts as a TF receptor and is required for TF utilization. Binds both apo- and holo-TF, via the TF C-terminus. The chain is Transferrin-binding protein A from Neisseria meningitidis serogroup B (strain ATCC BAA-335 / MC58).